The sequence spans 227 residues: Ornithine decarboxylase antizyme 1 (227 aa).

The disordered stretch occupies residues Glu-20–Ser-50. Residues Leu-36 to Ser-50 are compositionally biased toward low complexity.

The protein belongs to the ODC antizyme family. In terms of assembly, interacts with ODC1 and thereby sterically blocks ODC homodimerization. Forms a ternary complex with PSMB4 and OAZ1 before PSMB4 is incorporated into the 20S proteasome. Interacts with AZIN2; this interaction disrupts the interaction between the antizyme and ODC1. Interacts with FAM171A1.

Functionally, ornithine decarboxylase (ODC) antizyme protein that negatively regulates ODC activity and intracellular polyamine biosynthesis and uptake in response to increased intracellular polyamine levels. Binds to ODC monomers, inhibiting the assembly of the functional ODC homodimer, and targets the monomers for ubiquitin-independent proteolytic destruction by the 26S proteasome. Triggers ODC degradation by inducing the exposure of a cryptic proteasome-interacting surface of ODC. Stabilizes AZIN2 by interfering with its ubiquitination. Also inhibits cellular uptake of polyamines by inactivating the polyamine uptake transporter. SMAD1/OAZ1/PSMB4 complex mediates the degradation of the CREBBP/EP300 repressor SNIP1. Involved in the translocation of AZIN2 from ER-Golgi intermediate compartment (ERGIC) to the cytosol. The chain is Ornithine decarboxylase antizyme 1 (OAZ1) from Bos taurus (Bovine).